A 168-amino-acid chain; its full sequence is Phosphopantetheine adenylyltransferase (168 aa).

Thr9 lines the substrate pocket. Residues 9-10 (TF) and His17 each bind ATP. The substrate site is built by Lys41, Leu73, and Arg87. ATP contacts are provided by residues 88 to 90 (GLR), Glu98, and 123 to 129 (YQFISGT).

Belongs to the bacterial CoaD family. Homohexamer. Mg(2+) is required as a cofactor.

Its subcellular location is the cytoplasm. The catalysed reaction is (R)-4'-phosphopantetheine + ATP + H(+) = 3'-dephospho-CoA + diphosphate. The protein operates within cofactor biosynthesis; coenzyme A biosynthesis; CoA from (R)-pantothenate: step 4/5. Functionally, reversibly transfers an adenylyl group from ATP to 4'-phosphopantetheine, yielding dephospho-CoA (dPCoA) and pyrophosphate. This Paraburkholderia phymatum (strain DSM 17167 / CIP 108236 / LMG 21445 / STM815) (Burkholderia phymatum) protein is Phosphopantetheine adenylyltransferase.